Consider the following 416-residue polypeptide: Gamma-glutamyl phosphate reductase (416 aa).

This sequence belongs to the gamma-glutamyl phosphate reductase family.

The protein resides in the cytoplasm. It carries out the reaction L-glutamate 5-semialdehyde + phosphate + NADP(+) = L-glutamyl 5-phosphate + NADPH + H(+). Its pathway is amino-acid biosynthesis; L-proline biosynthesis; L-glutamate 5-semialdehyde from L-glutamate: step 2/2. Functionally, catalyzes the NADPH-dependent reduction of L-glutamate 5-phosphate into L-glutamate 5-semialdehyde and phosphate. The product spontaneously undergoes cyclization to form 1-pyrroline-5-carboxylate. The protein is Gamma-glutamyl phosphate reductase of Leptospira interrogans serogroup Icterohaemorrhagiae serovar Lai (strain 56601).